The sequence spans 562 residues: Tissue-type plasminogen activator (562 aa).

The signal sequence occupies residues 1 to 22 (MDAMKRGLCCVLLLCGAVFVSP). The propeptide occupies 23-32 (SQEIHARFRR). Residues 33–35 (GAR) constitute a propeptide, removed by plasmin. In terms of domain architecture, Fibronectin type-I spans 39–81 (VICRDEKTQMIYQQHQSWLRPVLRSNRVEYCWCNSGRAQCHSV). Disulfide bonds link C41–C71, C69–C78, C86–C97, C91–C108, C110–C119, C127–C208, C148–C190, C179–C203, C215–C296, C236–C278, C267–C291, C299–C430, C342–C358, C350–C419, C444–C519, C476–C492, and C509–C537. An important for binding to annexin A2 region spans residues 42 to 52 (RDEKTQMIYQQ). An EGF-like domain is found at 82–120 (PVKSCSEPRCFNGGTCQQALYFSDFVCQCPEGFAGKCCE). An O-linked (Fuc) threonine glycan is attached at T96. Kringle domains are found at residues 127–208 (CYED…TPAC) and 215–296 (CYFG…VPSC). N152 is a glycosylation site (N-linked (GlcNAc...) asparagine). N219 carries an N-linked (GlcNAc...) asparagine; partial glycan. Residues 311 to 561 (IKGGLFADIA…YLDWIRDNMR (251 aa)) form the Peptidase S1 domain. Catalysis depends on charge relay system residues H357 and D406. Residue N483 is glycosylated (N-linked (GlcNAc...) asparagine). The active-site Charge relay system is S513.

Belongs to the peptidase S1 family. In terms of assembly, heterodimer of chain A and chain B held by a disulfide bond. Forms a heterodimer with SERPINA5. Binds to fibrin with high affinity. This interaction leads to an increase in the catalytic efficiency of the enzyme between 100-fold and 1000-fold, due to an increase in affinity for plasminogen. Similarly, binding to heparin increases the activation of plasminogen. Binds to annexin A2, cytokeratin-8, fibronectin and laminin. Binds to mannose receptor and the low-density lipoprotein receptor-related protein (LRP1); these proteins are involved in TPA clearance. Yet unidentified interactions on endothelial cells and vascular smooth muscle cells (VSMC) lead to a 100-fold stimulation of plasminogen activation. In addition, binding to VSMC reduces TPA inhibition by PAI-1 by 30-fold. Binds LRP1B; binding is followed by internalization and degradation. Interacts with SERPINE1. In complex with SERPINE1, interacts with SORL1. Interacts with apyrase from Anopheles gambiae saliva; the interaction results in PLAT activation probably via an allosteric activation mechanism. Post-translationally, the single chain, almost fully active enzyme, can be further processed into a two-chain fully active form by a cleavage after Arg-310 catalyzed by plasmin, tissue kallikrein or factor Xa. Differential cell-specific N-linked glycosylation gives rise to two glycoforms, type I (glycosylated at Asn-219) and type II (not glycosylated at Asn-219). The single chain type I glycoform is less readily converted into the two-chain form by plasmin, and the two-chain type I glycoform has a lower activity than the two-chain type II glycoform in the presence of fibrin. In terms of processing, N-glycosylation of Asn-152; the bound oligomannosidic glycan is involved in the interaction with the mannose receptor. Post-translationally, characterization of O-linked glycan was studied in Bowes melanoma cell line. As to expression, synthesized in numerous tissues (including tumors) and secreted into most extracellular body fluids, such as plasma, uterine fluid, saliva, gingival crevicular fluid, tears, seminal fluid, and milk.

Its subcellular location is the secreted. The protein resides in the extracellular space. The catalysed reaction is Specific cleavage of Arg-|-Val bond in plasminogen to form plasmin.. With respect to regulation, inhibited by SERPINA5. Inhibited by SERPINE1. Functionally, converts the abundant, but inactive, zymogen plasminogen to plasmin by hydrolyzing a single Arg-Val bond in plasminogen. By controlling plasmin-mediated proteolysis, it plays an important role in tissue remodeling and degradation, in cell migration and many other physiopathological events. During oocyte activation, plays a role in cortical granule reaction in the zona reaction, which contributes to the block to polyspermy. The chain is Tissue-type plasminogen activator from Homo sapiens (Human).